Reading from the N-terminus, the 376-residue chain is Transcriptional regulator STP4 (376 aa).

Disordered stretches follow at residues 25–58, 89–122, and 137–210; these read QNYCSIKSPSPTSTPTSTSLTMTSPPQLHNPHAS, SSNSPTPSNSSYSPTLLIPSNDRPASSSVYSNSS, and VNCI…NWKP. 2 stretches are compositionally biased toward low complexity: residues 32 to 50 and 89 to 103; these read SPSPTSTPTSTSLTMTSPP and SSNSPTPSNSSYSPT. Polar residues-rich tracts occupy residues 146–183 and 191–200; these read PRSTSNLTENSEQSFTSQQSHPAISSNATITSPQLSVK and EPQNSNTIIS. The segment at 241 to 263 adopts a C2H2-type zinc-finger fold; the sequence is HICKYCERGFARPNDLFRHVKCH.

It is found in the nucleus. Probable transcription factor involved in response to cell wall damage. The chain is Transcriptional regulator STP4 (STP4) from Candida albicans (strain SC5314 / ATCC MYA-2876) (Yeast).